The chain runs to 101 residues: Interleukin-8 (101 aa).

The N-terminal stretch at Met1 to Ala22 is a signal peptide. The residue at position 27 (Arg27) is a Citrulline. 2 cysteine pairs are disulfide-bonded: Cys34/Cys61 and Cys36/Cys77.

The protein belongs to the intercrine alpha (chemokine CxC) family. Homodimer. Interacts with TNFAIP6 (via Link domain); this interaction interferes with chemokine binding to glycosaminoglycans. In terms of processing, citrullination at Arg-27 prevents proteolysis, and dampens tissue inflammation, it also enhances leukocytosis, possibly through impaired chemokine clearance from the blood circulation.

The protein resides in the secreted. In terms of biological role, chemotactic factor that mediates inflammatory response by attracting neutrophils, basophils, and T-cells to clear pathogens and protect the host from infection. Also plays an important role in neutrophil activation. Released in response to an inflammatory stimulus, exerts its effect by binding to the G-protein-coupled receptors CXCR1 and CXCR2, primarily found in neutrophils, monocytes and endothelial cells. G-protein heterotrimer (alpha, beta, gamma subunits) constitutively binds to CXCR1/CXCR2 receptor and activation by IL8 leads to beta and gamma subunits release from Galpha (GNAI2 in neutrophils) and activation of several downstream signaling pathways including PI3K and MAPK pathways. In Felis catus (Cat), this protein is Interleukin-8 (CXCL8).